Reading from the N-terminus, the 422-residue chain is 3-carboxy-cis,cis-muconate cycloisomerase (422 aa).

It belongs to the class-II fumarase/aspartase family. Homotetramer.

It is found in the cytoplasm. The enzyme catalyses 2-(carboxymethyl)-5-oxo-2,5-dihydro-2-furoate = 3-carboxy-cis,cis-muconate + H(+). The protein operates within aromatic compound metabolism; beta-ketoadipate pathway; 5-oxo-4,5-dihydro-2-furylacetate from 3-carboxy-cis,cis-muconate: step 1/2. Catalyzes an anti cycloisomerization. The chain is 3-carboxy-cis,cis-muconate cycloisomerase (pcaB) from Pseudomonas putida (Arthrobacter siderocapsulatus).